The primary structure comprises 295 residues: Phosphatidylserine decarboxylase proenzyme (295 aa).

Residues aspartate 90 and serine 258 each act as charge relay system; for autoendoproteolytic cleavage activity in the active site. Serine 258 functions as the Schiff-base intermediate with substrate; via pyruvic acid; for decarboxylase activity in the catalytic mechanism. Serine 258 is subject to Pyruvic acid (Ser); by autocatalysis.

This sequence belongs to the phosphatidylserine decarboxylase family. PSD-B subfamily. Prokaryotic type I sub-subfamily. Heterodimer of a large membrane-associated beta subunit and a small pyruvoyl-containing alpha subunit. Pyruvate serves as cofactor. Is synthesized initially as an inactive proenzyme. Formation of the active enzyme involves a self-maturation process in which the active site pyruvoyl group is generated from an internal serine residue via an autocatalytic post-translational modification. Two non-identical subunits are generated from the proenzyme in this reaction, and the pyruvate is formed at the N-terminus of the alpha chain, which is derived from the carboxyl end of the proenzyme. The autoendoproteolytic cleavage occurs by a canonical serine protease mechanism, in which the side chain hydroxyl group of the serine supplies its oxygen atom to form the C-terminus of the beta chain, while the remainder of the serine residue undergoes an oxidative deamination to produce ammonia and the pyruvoyl prosthetic group on the alpha chain. During this reaction, the Ser that is part of the protease active site of the proenzyme becomes the pyruvoyl prosthetic group, which constitutes an essential element of the active site of the mature decarboxylase.

It localises to the cell membrane. It carries out the reaction a 1,2-diacyl-sn-glycero-3-phospho-L-serine + H(+) = a 1,2-diacyl-sn-glycero-3-phosphoethanolamine + CO2. The protein operates within phospholipid metabolism; phosphatidylethanolamine biosynthesis; phosphatidylethanolamine from CDP-diacylglycerol: step 2/2. Its function is as follows. Catalyzes the formation of phosphatidylethanolamine (PtdEtn) from phosphatidylserine (PtdSer). This is Phosphatidylserine decarboxylase proenzyme from Blochmanniella pennsylvanica (strain BPEN).